The chain runs to 767 residues: Bifunctional lysine-specific demethylase and histidyl-hydroxylase NO66 (767 aa).

Residues 21–324 form a disordered region; it reads TVSQKQQREK…GRQEAHRQNS (304 aa). Ser-44 carries the post-translational modification Phosphoserine. A compositionally biased stretch (acidic residues) spans 46-71; sequence SDDDDEDDGEGEDDNDSNSDEDESGS. Low complexity predominate over residues 72–81; it reads ESDATSADDS. Positions 82–98 are enriched in acidic residues; that stretch reads FSSDDNDDDDSGDEDGS. 2 stretches are compositionally biased toward polar residues: residues 127 to 137 and 177 to 199; these read YTINSENSSVE and ESATNGRIQQRKSMVEPATTSKP. Position 214 is a phosphoserine (Ser-214). Polar residues predominate over residues 262-279; that stretch reads PSSSGASCPLPSKTSKQV. The span at 315-324 shows a compositional bias: basic and acidic residues; the sequence is GRQEAHRQNS. One can recognise a JmjC domain in the interval 420–565; the sequence is CSIRILNPST…NLLEKLMPMV (146 aa). Positions 466, 468, and 531 each coordinate Fe cation.

This sequence belongs to the ROX family. NO66 subfamily. The cofactor is Fe(2+).

It is found in the nucleus. The catalysed reaction is N(6),N(6)-dimethyl-L-lysyl(36)-[histone H3] + 2 2-oxoglutarate + 2 O2 = L-lysyl(36)-[histone H3] + 2 formaldehyde + 2 succinate + 2 CO2. Oxygenase that can act as both a histone lysine demethylase and a ribosomal histidine hydroxylase. Specifically demethylates 'Lys-4' (H3K4me) and 'Lys-36' (H3K36me) of histone H3, thereby playing a central role in histone code. The sequence is that of Bifunctional lysine-specific demethylase and histidyl-hydroxylase NO66 from Drosophila willistoni (Fruit fly).